Consider the following 268-residue polypeptide: tRNA pseudouridine synthase A (268 aa).

Asp-52 (nucleophile) is an active-site residue. Tyr-110 serves as a coordination point for substrate.

This sequence belongs to the tRNA pseudouridine synthase TruA family. As to quaternary structure, homodimer.

It catalyses the reaction uridine(38/39/40) in tRNA = pseudouridine(38/39/40) in tRNA. Its function is as follows. Formation of pseudouridine at positions 38, 39 and 40 in the anticodon stem and loop of transfer RNAs. The protein is tRNA pseudouridine synthase A of Prochlorococcus marinus (strain MIT 9312).